The following is a 223-amino-acid chain: Cytidylate kinase (223 aa).

Residue 12-20 (GPAGSGKST) participates in ATP binding.

It belongs to the cytidylate kinase family. Type 1 subfamily.

The protein resides in the cytoplasm. It carries out the reaction CMP + ATP = CDP + ADP. The enzyme catalyses dCMP + ATP = dCDP + ADP. This is Cytidylate kinase from Aster yellows witches'-broom phytoplasma (strain AYWB).